The following is a 118-amino-acid chain: Large ribosomal subunit protein bL20 (118 aa).

It belongs to the bacterial ribosomal protein bL20 family.

Binds directly to 23S ribosomal RNA and is necessary for the in vitro assembly process of the 50S ribosomal subunit. It is not involved in the protein synthesizing functions of that subunit. In Ectopseudomonas mendocina (strain ymp) (Pseudomonas mendocina), this protein is Large ribosomal subunit protein bL20.